We begin with the raw amino-acid sequence, 328 residues long: Beta-ketoacyl-[acyl-carrier-protein] synthase III (328 aa).

Active-site residues include Cys122 and His255. An ACP-binding region spans residues Gln256–Arg260. The active site involves Asn285.

The protein belongs to the thiolase-like superfamily. FabH family. Homodimer.

It localises to the cytoplasm. It carries out the reaction malonyl-[ACP] + acetyl-CoA + H(+) = 3-oxobutanoyl-[ACP] + CO2 + CoA. Its pathway is lipid metabolism; fatty acid biosynthesis. Its function is as follows. Catalyzes the condensation reaction of fatty acid synthesis by the addition to an acyl acceptor of two carbons from malonyl-ACP. Catalyzes the first condensation reaction which initiates fatty acid synthesis and may therefore play a role in governing the total rate of fatty acid production. Possesses both acetoacetyl-ACP synthase and acetyl transacylase activities. Its substrate specificity determines the biosynthesis of branched-chain and/or straight-chain of fatty acids. The chain is Beta-ketoacyl-[acyl-carrier-protein] synthase III from Bordetella pertussis (strain Tohama I / ATCC BAA-589 / NCTC 13251).